The chain runs to 204 residues: Ribosomal RNA large subunit methyltransferase E (204 aa).

G49, W51, D69, N87, and D111 together coordinate S-adenosyl-L-methionine. Catalysis depends on K151, which acts as the Proton acceptor.

This sequence belongs to the class I-like SAM-binding methyltransferase superfamily. RNA methyltransferase RlmE family.

The protein localises to the cytoplasm. It catalyses the reaction uridine(2552) in 23S rRNA + S-adenosyl-L-methionine = 2'-O-methyluridine(2552) in 23S rRNA + S-adenosyl-L-homocysteine + H(+). In terms of biological role, specifically methylates the uridine in position 2552 of 23S rRNA at the 2'-O position of the ribose in the fully assembled 50S ribosomal subunit. This chain is Ribosomal RNA large subunit methyltransferase E, found in Nitratidesulfovibrio vulgaris (strain ATCC 29579 / DSM 644 / CCUG 34227 / NCIMB 8303 / VKM B-1760 / Hildenborough) (Desulfovibrio vulgaris).